The primary structure comprises 210 residues: NADH dehydrogenase [ubiquinone] iron-sulfur protein 8, mitochondrial (210 aa).

Residues Met-1–Ala-34 constitute a mitochondrion transit peptide. 2 4Fe-4S ferredoxin-type domains span residues Arg-102–Glu-131 and Thr-141–Asn-170. [4Fe-4S] cluster-binding residues include Cys-111, Cys-114, Cys-117, Cys-121, Cys-150, Cys-153, Cys-156, and Cys-160.

Belongs to the complex I 23 kDa subunit family. Core subunit of respiratory chain NADH dehydrogenase (Complex I) which is composed of 45 different subunits. This is a component of the iron-sulfur (IP) fragment of the enzyme. Interacts with RAB5IF. [4Fe-4S] cluster is required as a cofactor.

Its subcellular location is the mitochondrion inner membrane. It carries out the reaction a ubiquinone + NADH + 5 H(+)(in) = a ubiquinol + NAD(+) + 4 H(+)(out). Its function is as follows. Core subunit of the mitochondrial membrane respiratory chain NADH dehydrogenase (Complex I) which catalyzes electron transfer from NADH through the respiratory chain, using ubiquinone as an electron acceptor. Essential for the catalytic activity and assembly of complex I. This Macaca fascicularis (Crab-eating macaque) protein is NADH dehydrogenase [ubiquinone] iron-sulfur protein 8, mitochondrial (NDUFS8).